The chain runs to 445 residues: Ribosomal protein uS12 methylthiotransferase RimO (445 aa).

One can recognise an MTTase N-terminal domain in the interval 4–119 (YKVGMVSLGC…INEAIMNFIN (116 aa)). Residues Cys13, Cys48, Cys82, Cys157, Cys161, and Cys164 each contribute to the [4Fe-4S] cluster site. In terms of domain architecture, Radical SAM core spans 143-373 (TTDKATAYLR…MLLQKEVSEE (231 aa)). A TRAM domain is found at 376-441 (KNKVGREYDV…EYDLVGVVCN (66 aa)).

It belongs to the methylthiotransferase family. RimO subfamily. It depends on [4Fe-4S] cluster as a cofactor.

Its subcellular location is the cytoplasm. It carries out the reaction L-aspartate(89)-[ribosomal protein uS12]-hydrogen + (sulfur carrier)-SH + AH2 + 2 S-adenosyl-L-methionine = 3-methylsulfanyl-L-aspartate(89)-[ribosomal protein uS12]-hydrogen + (sulfur carrier)-H + 5'-deoxyadenosine + L-methionine + A + S-adenosyl-L-homocysteine + 2 H(+). Its function is as follows. Catalyzes the methylthiolation of an aspartic acid residue of ribosomal protein uS12. The polypeptide is Ribosomal protein uS12 methylthiotransferase RimO (Clostridium perfringens (strain 13 / Type A)).